A 605-amino-acid chain; its full sequence is Kelch-like protein 41b (605 aa).

A BTB domain is found at 32–102 (VDCTLKIGDR…YSAEIDLVDD (71 aa)). The BACK domain occupies 136-238 (CLAVFRLGLV…PEKYFREKVE (103 aa)). 5 Kelch repeats span residues 345–397 (QLFI…ESEN), 398–446 (LLFA…SHNN), 447–494 (LVYC…VHKG), 496–541 (IIVT…SSGG), and 543–598 (LFSI…MRLN).

The protein localises to the cytoplasm. The protein resides in the cytoskeleton. It localises to the sarcoplasmic reticulum membrane. It is found in the endoplasmic reticulum membrane. Its function is as follows. Involved in skeletal muscle development and maintenance. The protein is Kelch-like protein 41b of Danio rerio (Zebrafish).